We begin with the raw amino-acid sequence, 713 residues long: Calpastatin (713 aa).

Disordered stretches follow at residues 1 to 187 (MNPT…LDPM) and 211 to 506 (DKKE…PVLP). Residues 21 to 30 (PNKKRHKKQA) show a composition bias toward basic residues. Residue Lys32 forms a Glycyl lysine isopeptide (Lys-Gly) (interchain with G-Cter in SUMO2) linkage. Positions 46 to 63 (VVHEKKTQEVKPKEHPEP) are enriched in basic and acidic residues. Lys50 is subject to N6-acetyllysine. Residues 85-94 (SRSNEQPTSE) are compositionally biased toward polar residues. Phosphoserine is present on residues Ser87 and Ser134. Position 136 is a phosphothreonine (Thr136). Residues 171-223 (TEEDNTTYTGPEVLDPMSSTYIEELGKREVTLPPKYRELLDKKEGIPVPPPDT) form an Inhibitory domain 1 repeat. Phosphoserine is present on Ser244. Composition is skewed to basic and acidic residues over residues 248-258 (DGKKTEKEKST), 304-332 (RKSE…KKCG), and 342-367 (YRLK…KPLS). The stretch at 307 to 359 (EPELDLSSIKEIDEAKAKEEKLKKCGEDDETVPPEYRLKPAMDKDGKPLLPEA) is one Inhibitory domain 2 repeat. Phosphoserine is present on residues Ser367, Ser369, and Ser376. Acidic residues predominate over residues 370–379 (ELIDELSEDF). Residues 380 to 397 (DQSKRKEKQSKPTEKTKE) show a composition bias toward basic and acidic residues. At Ser441 the chain carries Phosphoserine. Residues 443-502 (GKKEADPEDGKPVEDKVKEKAKEEDREKLGEKEETIPPDYRLEEVKDKDGKTLPHKDPKE) show a composition bias toward basic and acidic residues. One copy of the Inhibitory domain 3 repeat lies at 447–500 (ADPEDGKPVEDKVKEKAKEEDREKLGEKEETIPPDYRLEEVKDKDGKTLPHKDP). Ser517 and Ser528 each carry phosphoserine. The disordered stretch occupies residues 536 to 713 (SAAVSEVVSQ…KQKSDGKSTS (178 aa)). A compositionally biased stretch (polar residues) spans 542 to 553 (VVSQTSAPTTHS). Ser575 and Ser577 each carry phosphoserine. One copy of the Inhibitory domain 4 repeat lies at 583-636 (PDPDENKPIEDKVKEKAEAEHRDKLGERDDTIPPEYRHLLDKDEEGKSTKPPTK). 2 stretches are compositionally biased toward basic and acidic residues: residues 583–646 (PDPD…KPEA) and 691–713 (KAKD…KSTS).

The protein belongs to the protease inhibitor I27 (calpastatin) family.

Specific inhibition of calpain (calcium-dependent cysteine protease). Plays a key role in postmortem tenderization of meat and have been proposed to be involved in muscle protein degradation in living tissue. This Sus scrofa (Pig) protein is Calpastatin (CAST).